Here is a 921-residue protein sequence, read N- to C-terminus: Probable dipeptidyl-aminopeptidase B (921 aa).

A disordered region spans residues 1–87 (MDAPATASRQ…EADTNDLETG (87 aa)). Residues 1-108 (MDAPATASRQ…RVGVDRGLKK (108 aa)) lie on the Cytoplasmic side of the membrane. Residues 22-33 (SSLSTVSTTSLV) show a composition bias toward low complexity. Residues 35 to 45 (DRLHEHNEKSY) are compositionally biased toward basic and acidic residues. Over residues 66–75 (PDDDDDDDES) the composition is skewed to acidic residues. Residues 109 to 129 (VILILAAAFLFAWGAALFVFL) form a helical; Signal-anchor for type II membrane protein membrane-spanning segment. The Vacuolar portion of the chain corresponds to 130-921 (SNKSYKHAST…KPIVEPKARV (792 aa)). N-linked (GlcNAc...) asparagine glycosylation is found at asparagine 131, asparagine 364, and asparagine 577. The active-site Charge relay system is the serine 768. Residue asparagine 827 is glycosylated (N-linked (GlcNAc...) asparagine). Residues aspartate 845 and histidine 878 each act as charge relay system in the active site.

This sequence belongs to the peptidase S9B family.

The protein localises to the vacuole membrane. It carries out the reaction Release of an N-terminal dipeptide, Xaa-Yaa-|-Zaa-, from a polypeptide, preferentially when Yaa is Pro, provided Zaa is neither Pro nor hydroxyproline.. In terms of biological role, type IV dipeptidyl-peptidase which removes N-terminal dipeptides sequentially from polypeptides having unsubstituted N-termini provided that the penultimate residue is proline. This chain is Probable dipeptidyl-aminopeptidase B (DAPB), found in Colletotrichum graminicola (strain M1.001 / M2 / FGSC 10212) (Maize anthracnose fungus).